A 435-amino-acid polypeptide reads, in one-letter code: Adenylosuccinate synthetase (435 aa).

Residues 17–23 (GDEGKGK) and 47–49 (GHT) contribute to the GTP site. The active-site Proton acceptor is Asp18. Residues Asp18 and Gly47 each coordinate Mg(2+). IMP is bound by residues 18 to 21 (DEGK), 45 to 48 (NAGH), Thr138, Arg152, Asn232, Thr247, and Arg311. His48 functions as the Proton donor in the catalytic mechanism. Residue 307–313 (VTTGRKR) participates in substrate binding. Residues Arg313, 339–341 (KLD), and 421–423 (GVG) each bind GTP.

The protein belongs to the adenylosuccinate synthetase family. In terms of assembly, homodimer. It depends on Mg(2+) as a cofactor.

The protein resides in the cytoplasm. It catalyses the reaction IMP + L-aspartate + GTP = N(6)-(1,2-dicarboxyethyl)-AMP + GDP + phosphate + 2 H(+). The protein operates within purine metabolism; AMP biosynthesis via de novo pathway; AMP from IMP: step 1/2. Functionally, plays an important role in the de novo pathway and in the salvage pathway of purine nucleotide biosynthesis. Catalyzes the first committed step in the biosynthesis of AMP from IMP. This is Adenylosuccinate synthetase from Caenorhabditis briggsae.